A 95-amino-acid polypeptide reads, in one-letter code: MRKYEIMYIIRPDIEEEAQTALIERFNTILTDNGAEIDKVDEKGKRRLAYEINDYRDGYYVIINFRGSEEAINEFDRLAKFNDDIIRHMAIKDEQ.

This sequence belongs to the bacterial ribosomal protein bS6 family.

In terms of biological role, binds together with bS18 to 16S ribosomal RNA. The chain is Small ribosomal subunit protein bS6 from Oceanobacillus iheyensis (strain DSM 14371 / CIP 107618 / JCM 11309 / KCTC 3954 / HTE831).